The chain runs to 49 residues: Large ribosomal subunit protein bL33 (49 aa).

This sequence belongs to the bacterial ribosomal protein bL33 family.

This Clostridioides difficile (strain 630) (Peptoclostridium difficile) protein is Large ribosomal subunit protein bL33.